The primary structure comprises 623 residues: MSTQDERQINTEYAVSLLEQLKQFYEQQLFTDIVLIVEGTEFPCHKMVLATCSSYFRAMFMSGLSESKQTHVHLRNVDAATLQIIITYAYTGNLAMNDSTVEQLYETACFLQVEDVLQRCREYLIKKINAENCVRLLSFADLFSCEELKQSAKRMVEHKFTAVYHQDAFMQLSHDLLIDILSSDNLNVEKEETVREAAMLWLEYNTESRSQYLSSVLSQIRIDALSEVTQRAWFQGLPPNDKSVVAQGLYKSMPKFFKPRLGMTKEEMMIFIEASSENPCSLYSSVCYSPQAEKVYKLCSPPADLHKVGTVVTPDNDIYIAGGQVPLKNTKTNHSKTSKLQTAFRTVNCFYWFDAQQNTWFPKTPMLFVRIKPSLVCCEGHIYAIGGDSVGGELNRRTVERYDTEKDEWTMVSPLPCAWQWSAAVVVHDCIYVMTLNLMYCYFPRSDSWVEMAMRQTSRSFASAAAFGDKIFYIGGLHIATNSGIRLPSGTVDGSSVTVEIYDVNKNEWKMAANIPAKRYSDPCVRAVVISNSLCVFMRETHLNERAKYVTYQYDLELDRWSLRQHISERVLWDLGRDFRCTVGKLYPSCLEESPWKPPTYLFSTDGTEEFELDGEMVALPPV.

Residues 31–98 (TDIVLIVEGT…AYTGNLAMND (68 aa)) enclose the BTB domain. One can recognise a BACK domain in the interval 133-229 (CVRLLSFADL…IRIDALSEVT (97 aa)). Ser300 carries the post-translational modification Phosphoserine. Kelch repeat units follow at residues 317-380 (DIYI…CCEG), 381-429 (HIYA…VVHD), 431-469 (IYVM…AFGD), 470-529 (KIFY…RAVV), and 535-581 (CVFM…DFRC).

As to quaternary structure, component of the BCR(KBTBD2) E3 ubiquitin ligase complex, at least composed of CUL3, KBTBD2 and RBX1. Interacts (via the BTB domain) with CUL3.

The protein operates within protein modification; protein ubiquitination. Substrate-specific adapter of a BCR (BTB-CUL3-RBX1) E3 ubiquitin ligase complex that acts as a regulator of the insulin signaling pathway, modulating insulin sensitivity by limiting PIK3R1/p85alpha abundance in adipocytes. Targets PIK3R1, the regulatory subunit of phosphatidylinositol 3-kinase (PI3K), for 'Lys-48'-linked polyubiquitination and proteasome-mediated degradation. The sequence is that of Kelch repeat and BTB domain-containing protein 2 (KBTBD2) from Pongo abelii (Sumatran orangutan).